Consider the following 146-residue polypeptide: Catabolic 3-dehydroquinase (146 aa).

The Proton acceptor role is filled by Y24. 3 residues coordinate substrate: N78, H84, and D91. The active-site Proton donor is H104. Substrate is bound by residues 105 to 106 and R115; that span reads IT.

It belongs to the type-II 3-dehydroquinase family. As to quaternary structure, homododecamer. Adopts a ring-like structure, composed of an arrangement of two hexameric rings stacked on top of one another.

It catalyses the reaction 3-dehydroquinate = 3-dehydroshikimate + H2O. It participates in aromatic compound metabolism; 3,4-dihydroxybenzoate biosynthesis; 3,4-dihydroxybenzoate from 3-dehydroquinate: step 1/2. Its function is as follows. Is involved in the catabolism of quinate. Allows the utilization of quinate as carbon source via the beta-ketoadipate pathway. In Candida dubliniensis (strain CD36 / ATCC MYA-646 / CBS 7987 / NCPF 3949 / NRRL Y-17841) (Yeast), this protein is Catabolic 3-dehydroquinase.